The following is a 772-amino-acid chain: C-Maf-inducing protein (772 aa).

One can recognise a PH domain in the interval 52–160 (KLLQEGDIQV…WFHSLQWKKK (109 aa)). LRR repeat units follow at residues 662–683 (NLENLSLAFTNVTSACAEQLIK), 686–706 (SLKQLNLWSTQFGDAGLRVLS), 711–731 (TLQVLNLCETPVSDAGLLALS), and 735–755 (SLCNLNMNSTKLSADTYEDLK).

Its subcellular location is the nucleus. The protein resides in the cytoplasm. Plays a role in T-cell signaling pathway. The protein is C-Maf-inducing protein (cmip) of Xenopus laevis (African clawed frog).